Reading from the N-terminus, the 131-residue chain is UPF0102 protein YraN (131 aa).

Residues 1–19 show a composition bias toward polar residues; the sequence is MATVPTRSGSPRQLTTKQT. Residues 1-21 are disordered; it reads MATVPTRSGSPRQLTTKQTGD.

It belongs to the UPF0102 family.

The polypeptide is UPF0102 protein YraN (Escherichia coli (strain K12 / MC4100 / BW2952)).